The chain runs to 453 residues: MSENMEELWSKTLEELKQQLSKPSFETWFQSTEPVEMSSTDLYISVPNEFTKDWLNSRYKNSIENSLKKISGKQLKIKFLLPGEKIKMEEQNNENEEKPESTSKKSSQGSEHTTWLNPKYTFDTFVIGNANRFAHAASLAVAEAPAKAYNPLFIYGGVGLGKTHLMHAIGHYVLSHQPNYRVVYISSEKFTNEFINAIRDNKTVNFRNKYRNVDILLVDDIQFLAGKEQTQEEFFHTFNTLHENDKQIIISSDRPPKEIPTLEDRLRSRFEWGLITDIQAPDLETRIAILRKKAYLEKLDIPNDVIVYIANQIDTNIRELEGGLIRVIAYSSMANKKITKETAEEALKDILPNKQPKKMTVEHIQKTVAQYFGLKVDDLKAKKRTRSVAFPRQIAMYLARELTDSSLPKIGDEFGGRDHTTVMHAHDKIASDLKKESHLNETIDEIKNLLHGD.

Positions 1–75 (MSENMEELWS…SLKKISGKQL (75 aa)) are domain I, interacts with DnaA modulators. The tract at residues 75-114 (LKIKFLLPGEKIKMEEQNNENEEKPESTSKKSSQGSEHTT) is domain II. A compositionally biased stretch (basic and acidic residues) spans 87 to 103 (KMEEQNNENEEKPESTS). Residues 87–112 (KMEEQNNENEEKPESTSKKSSQGSEH) are disordered. A domain III, AAA+ region region spans residues 115–331 (WLNPKYTFDT…GGLIRVIAYS (217 aa)). Residues G159, G161, K162, and T163 each contribute to the ATP site. Residues 332 to 453 (SMANKKITKE…DEIKNLLHGD (122 aa)) form a domain IV, binds dsDNA region.

It belongs to the DnaA family. Oligomerizes as a right-handed, spiral filament on DNA at oriC.

The protein resides in the cytoplasm. Functionally, plays an essential role in the initiation and regulation of chromosomal replication. ATP-DnaA binds to the origin of replication (oriC) to initiate formation of the DNA replication initiation complex once per cell cycle. Binds the DnaA box (a 9 base pair repeat at the origin) and separates the double-stranded (ds)DNA. Forms a right-handed helical filament on oriC DNA; dsDNA binds to the exterior of the filament while single-stranded (ss)DNA is stabiized in the filament's interior. The ATP-DnaA-oriC complex binds and stabilizes one strand of the AT-rich DNA unwinding element (DUE), permitting loading of DNA polymerase. After initiation quickly degrades to an ADP-DnaA complex that is not apt for DNA replication. Binds acidic phospholipids. The polypeptide is Chromosomal replication initiator protein DnaA (Natranaerobius thermophilus (strain ATCC BAA-1301 / DSM 18059 / JW/NM-WN-LF)).